Here is a 1076-residue protein sequence, read N- to C-terminus: Ribosome quality control complex subunit NEMF (1076 aa).

Residue Thr7 is modified to Phosphothreonine. A coiled-coil region spans residues 296–359; the sequence is VDEFYSKIEG…LIEMNLQIVD (64 aa). Ser417 carries the phosphoserine modification. A disordered region spans residues 420-453; sequence EDDDVDGDVNVEKNETEPPKGKKKKQKNKQLQKP. Residues 429-439 show a composition bias toward basic and acidic residues; the sequence is NVEKNETEPPK. The segment covering 440 to 449 has biased composition (basic residues); the sequence is GKKKKQKNKQ. Positions 483-514 form a coiled coil; it reads AAKKTQKTVEAAEKAFKSAEKKTKQTLKEVQT. Composition is skewed to acidic residues over residues 691-710 and 742-754; these read ISEE…EDKE and LIQE…EGEY. 2 disordered regions span residues 691 to 715 and 742 to 972; these read ISEE…HETP and LIQE…DLDQ. Residues Ser747, Ser748, and Ser763 each carry the phosphoserine modification. Residues 755–768 are compositionally biased toward basic and acidic residues; that stretch reads EEVRKDQDSVGEMK. The span at 777 to 795 shows a compositional bias: polar residues; it reads YPDTTIDLSHLQPQRSIQK. A Phosphoserine modification is found at Ser831. Over residues 839 to 854 the composition is skewed to basic and acidic residues; it reads LEGKDKEKESTVHIET. A coiled-coil region spans residues 869–894; the sequence is KRGQKSKMKKMKEKYKDQDEEDRELI. Positions 870 to 881 are enriched in basic residues; that stretch reads RGQKSKMKKMKE. Basic and acidic residues predominate over residues 937–965; sequence DNIKKETPFLEVITHELQDFAVDDPHDDK.

Belongs to the NEMF family. In terms of assembly, component of the ribosome quality control complex (RQC), composed of the E3 ubiquitin ligase LTN1, TCF25 and NEMF associated with the 60S ribosomal subunit. The complex probably also contains VCP/p97 and its ubiquitin-binding cofactors. Interacts (via its N-terminus) with XPO1. Expressed in brain, heart, liver, lung, spleen, and skeletal muscle. Also expressed at lower levels in stomach and testis.

The protein resides in the cytoplasm. It localises to the cytosol. Its subcellular location is the nucleus. In terms of biological role, key component of the ribosome quality control complex (RQC), a ribosome-associated complex that mediates the extraction of incompletely synthesized nascent chains from stalled ribosomes as well as their ubiquitin-mediated proteasomal degradation. Thereby, frees 60S subunit ribosomes from the stalled translation complex and prevents the accumulation of nascent polypeptide chains that are potentially toxic for the cell. Within the RQC complex, NEMF specifically binds stalled 60S ribosomal subunits by recognizing an exposed, nascent chain-conjugated tRNA moiety and promotes the recruitment of LTN1 to stalled 60S subunits. Following binding to stalled 60S ribosomal subunits, NEMF mediates CAT tailing by recruiting alanine-charged tRNA to the A-site and directing the elongation of stalled nascent chains independently of mRNA or 40S subunits, leading to non-templated C-terminal alanine extensions (CAT tails). Mainly recruits alanine-charged tRNAs, but can also other amino acid-charged tRNAs. CAT tailing is required to promote ubiquitination of stalled nascent chains by different E3 ubiquitin-protein ligases. In the canonical RQC pathway (RQC-L), CAT tailing facilitates LTN1-dependent ubiquitination by exposing lysine residues that would otherwise remain buried in the ribosomal exit tunnel. In the alternative RQC pathway (RQC-C) CAT tailing creates an C-degron mainly composed of alanine that is recognized by the CRL2(KLHDC10) and RCHY1/PIRH2 E3 ligases, leading to ubiquitination and degradation of stalled nascent chains. NEMF may also indirectly play a role in nuclear export. The protein is Ribosome quality control complex subunit NEMF of Homo sapiens (Human).